Consider the following 342-residue polypeptide: Succinylglutamate desuccinylase (342 aa).

Zn(2+) is bound by residues His63, Glu66, and His155. Residue Glu219 is part of the active site.

Belongs to the AspA/AstE family. Succinylglutamate desuccinylase subfamily. Requires Zn(2+) as cofactor.

The enzyme catalyses N-succinyl-L-glutamate + H2O = L-glutamate + succinate. Its pathway is amino-acid degradation; L-arginine degradation via AST pathway; L-glutamate and succinate from L-arginine: step 5/5. Functionally, transforms N(2)-succinylglutamate into succinate and glutamate. In Vibrio vulnificus (strain YJ016), this protein is Succinylglutamate desuccinylase.